The chain runs to 450 residues: Trigger factor (450 aa).

The 87-residue stretch at 163-249 folds into the PPIase FKBP-type domain; the sequence is EDFVLIDYQG…LKEIQEQILP (87 aa). Positions 431 to 443 are enriched in acidic residues; it reads PEVETEVSESAAD. The segment at 431 to 450 is disordered; sequence PEVETEVSESAADVEDKTDQ.

Belongs to the FKBP-type PPIase family. Tig subfamily.

The protein localises to the cytoplasm. The enzyme catalyses [protein]-peptidylproline (omega=180) = [protein]-peptidylproline (omega=0). Functionally, involved in protein export. Acts as a chaperone by maintaining the newly synthesized protein in an open conformation. Functions as a peptidyl-prolyl cis-trans isomerase. The polypeptide is Trigger factor (Desulforapulum autotrophicum (strain ATCC 43914 / DSM 3382 / VKM B-1955 / HRM2) (Desulfobacterium autotrophicum)).